A 469-amino-acid chain; its full sequence is Keratin, type I cytoskeletal 26 (469 aa).

The head stretch occupies residues 1-82 (MSFRLSSGSR…ENEHGLLPGN (82 aa)). The coil 1A stretch occupies residues 83–118 (EKVTLQNLNDRLASYLDHVCTLEEANADLEQKIKGW). Residues 83–398 (EKVTLQNLND…KLIDGEGRKS (316 aa)) enclose the IF rod domain. The interval 119-140 (YEKYGPGSGRQLAYDCSKYFSV) is linker 1. The interval 141-232 (TEDLKRQIIS…KNHQEEMKVM (92 aa)) is coil 1B. The tract at residues 233-255 (QGAAGGNVNVEINAAPGVDLTVL) is linker 12. The tract at residues 256 to 394 (LNNMRAEYED…EMYCKLIDGE (139 aa)) is coil 2. Residues 395–465 (GRKSKSTYCK…NITMEQRLPS (71 aa)) are tail. Disordered regions lie at residues 398–421 (SKST…KDSK) and 450–469 (KSSK…KVPQ). Basic and acidic residues predominate over residues 405-421 (SEGRGPKNSENQVKDSK).

The protein belongs to the intermediate filament family. Heterotetramer of two type I and two type II keratins.

The sequence is that of Keratin, type I cytoskeletal 26 from Bos taurus (Bovine).